A 63-amino-acid polypeptide reads, in one-letter code: Small ribosomal subunit protein bS21 (63 aa).

It belongs to the bacterial ribosomal protein bS21 family.

This Bacteroides fragilis (strain ATCC 25285 / DSM 2151 / CCUG 4856 / JCM 11019 / LMG 10263 / NCTC 9343 / Onslow / VPI 2553 / EN-2) protein is Small ribosomal subunit protein bS21.